The chain runs to 163 residues: Ribonuclease P protein subunit p25-like protein (163 aa).

Disordered regions lie at residues 1 to 22 (MEHYRKAGSVELPAPSPMPQLP) and 129 to 163 (NEYGYQPPGAPPDLGPTPASSCGPQPRRRARDTRF). Basic residues predominate over residues 154–163 (PRRRARDTRF).

It belongs to the histone-like Alba family.

The protein resides in the nucleus. Its function is as follows. May be a component of ribonuclease P or MRP. In Bos taurus (Bovine), this protein is Ribonuclease P protein subunit p25-like protein (RPP25L).